The following is a 402-amino-acid chain: Indole-3-glycerol phosphate synthase, chloroplastic (402 aa).

Residues Met-1 to Ser-65 constitute a chloroplast transit peptide.

Belongs to the TrpC family. Expressed in leaves.

The protein resides in the plastid. It is found in the chloroplast. The catalysed reaction is 1-(2-carboxyphenylamino)-1-deoxy-D-ribulose 5-phosphate + H(+) = (1S,2R)-1-C-(indol-3-yl)glycerol 3-phosphate + CO2 + H2O. It participates in amino-acid biosynthesis; L-tryptophan biosynthesis; L-tryptophan from chorismate: step 4/5. Indole-3-glycerol phosphate synthase required for tryptophan biosynthesis. This Arabidopsis thaliana (Mouse-ear cress) protein is Indole-3-glycerol phosphate synthase, chloroplastic.